A 505-amino-acid polypeptide reads, in one-letter code: Maturase K (505 aa).

Belongs to the intron maturase 2 family. MatK subfamily.

It localises to the plastid. Its subcellular location is the chloroplast. Its function is as follows. Usually encoded in the trnK tRNA gene intron. Probably assists in splicing its own and other chloroplast group II introns. This Physcomitrium patens (Spreading-leaved earth moss) protein is Maturase K.